A 353-amino-acid polypeptide reads, in one-letter code: UDP-N-acetylglucosamine--N-acetylmuramyl-(pentapeptide) pyrophosphoryl-undecaprenol N-acetylglucosamine transferase (353 aa).

Residues Asn123, Arg161, Ser189, Ile243, 262 to 267 (ALTVSE), and Gln287 contribute to the UDP-N-acetyl-alpha-D-glucosamine site.

It belongs to the glycosyltransferase 28 family. MurG subfamily.

The protein resides in the cell membrane. It catalyses the reaction di-trans,octa-cis-undecaprenyl diphospho-N-acetyl-alpha-D-muramoyl-L-alanyl-D-glutamyl-meso-2,6-diaminopimeloyl-D-alanyl-D-alanine + UDP-N-acetyl-alpha-D-glucosamine = di-trans,octa-cis-undecaprenyl diphospho-[N-acetyl-alpha-D-glucosaminyl-(1-&gt;4)]-N-acetyl-alpha-D-muramoyl-L-alanyl-D-glutamyl-meso-2,6-diaminopimeloyl-D-alanyl-D-alanine + UDP + H(+). The protein operates within cell wall biogenesis; peptidoglycan biosynthesis. Functionally, cell wall formation. Catalyzes the transfer of a GlcNAc subunit on undecaprenyl-pyrophosphoryl-MurNAc-pentapeptide (lipid intermediate I) to form undecaprenyl-pyrophosphoryl-MurNAc-(pentapeptide)GlcNAc (lipid intermediate II). The polypeptide is UDP-N-acetylglucosamine--N-acetylmuramyl-(pentapeptide) pyrophosphoryl-undecaprenol N-acetylglucosamine transferase (Buchnera aphidicola subsp. Baizongia pistaciae (strain Bp)).